The sequence spans 160 residues: Large ribosomal subunit protein uL16 (160 aa).

Residues 138-160 (KNLENSSQENTKDSKKSQEEVKQ) form a disordered region. Positions 147 to 160 (NTKDSKKSQEEVKQ) are enriched in basic and acidic residues.

This sequence belongs to the universal ribosomal protein uL16 family. As to quaternary structure, part of the 50S ribosomal subunit.

Binds 23S rRNA and is also seen to make contacts with the A and possibly P site tRNAs. The polypeptide is Large ribosomal subunit protein uL16 (Prochlorococcus marinus (strain AS9601)).